We begin with the raw amino-acid sequence, 1609 residues long: Probable cation-transporting ATPase I (1609 aa).

Helical transmembrane passes span 30 to 50, 176 to 196, 238 to 258, 357 to 377, 641 to 661, 673 to 693, 778 to 798, 921 to 941, 969 to 989, and 997 to 1017; these read GAVN…WPVV, LAIL…SAAV, IALS…GTPL, LIAA…AGAI, VHLA…ASAG, WFSP…VSAS, ILAV…ALLV, LFEG…ATGV, TSKV…LALL, and AVAD…PLVA. D1053 acts as the 4-aspartylphosphate intermediate in catalysis. Residues D1335 and D1339 each coordinate Mg(2+). Helical transmembrane passes span 1396 to 1416 and 1426 to 1446; these read ILVG…VFGA and LLLV…VTSQ. The tract at residues 1447–1476 is disordered; the sequence is YEEPGEDEYQTDEEADEARRTHQHEVLTGP. Over residues 1449-1462 the composition is skewed to acidic residues; the sequence is EPGEDEYQTDEEAD. 2 helical membrane-spanning segments follow: residues 1542-1562 and 1573-1593; these read VVAT…TPVI and PIAW…SVLA.

Belongs to the cation transport ATPase (P-type) (TC 3.A.3) family.

Its subcellular location is the cell membrane. It catalyses the reaction ATP + H2O = ADP + phosphate + H(+). The polypeptide is Probable cation-transporting ATPase I (ctpI) (Mycobacterium leprae (strain TN)).